A 286-amino-acid polypeptide reads, in one-letter code: ATP synthase gamma chain (286 aa).

The protein belongs to the ATPase gamma chain family. As to quaternary structure, F-type ATPases have 2 components, CF(1) - the catalytic core - and CF(0) - the membrane proton channel. CF(1) has five subunits: alpha(3), beta(3), gamma(1), delta(1), epsilon(1). CF(0) has three main subunits: a, b and c.

The protein resides in the cell inner membrane. In terms of biological role, produces ATP from ADP in the presence of a proton gradient across the membrane. The gamma chain is believed to be important in regulating ATPase activity and the flow of protons through the CF(0) complex. The protein is ATP synthase gamma chain of Dechloromonas aromatica (strain RCB).